The chain runs to 23 residues: Acidic phospholipase CHA-E6a (23 aa).

Belongs to the phospholipase A2 family. Group II subfamily. D49 sub-subfamily. Ca(2+) is required as a cofactor. Contains 7 disulfide bonds. In terms of tissue distribution, expressed by the venom gland.

The protein resides in the secreted. The enzyme catalyses a 1,2-diacyl-sn-glycero-3-phosphocholine + H2O = a 1-acyl-sn-glycero-3-phosphocholine + a fatty acid + H(+). Its function is as follows. Snake venom phospholipase A2 (PLA2) that shows high lipolytic (1048 umol/mg/min) and weak ADP-induced platelet aggregation activities. Also shows weak anticoagulant activity (IC(50) is less than 1.0 uM). PLA2 catalyzes the calcium-dependent hydrolysis of the 2-acyl groups in 3-sn-phosphoglycerides. The chain is Acidic phospholipase CHA-E6a from Crotalus horridus (Timber rattlesnake).